The primary structure comprises 254 residues: MNYLLISSKKDPASQNIKRHLENYGYFVHELEKKSNTSKKSDFHDSSLYVFLSKHRSESKKPTLTVHTPGNLTKDNSHGGNPEEICHCNPVFNTLLLQNIDKYNSMEEYQELGFEVSFEVLHHGPTDLNAPSAFVEIGSSEMQWQINDAAEIITNALIDTINAISYGDFEEKEKIIGLGGGHYSPKFTKLALKNEYHVGYLTPKHAKLSENILNQLITKQSFDFVTIDWKGLYGEDKKIYIEFFEKFEIPWKRV.

The protein belongs to the DtdA deacylase family. As to quaternary structure, monomer. The cofactor is Zn(2+).

It catalyses the reaction a D-aminoacyl-tRNA + H2O = a tRNA + a D-alpha-amino acid + H(+). It carries out the reaction glycyl-tRNA(Ala) + H2O = tRNA(Ala) + glycine + H(+). Functionally, D-aminoacyl-tRNA deacylase with broad substrate specificity. By recycling D-aminoacyl-tRNA to D-amino acids and free tRNA molecules, this enzyme counteracts the toxicity associated with the formation of D-aminoacyl-tRNA entities in vivo. This chain is D-aminoacyl-tRNA deacylase, found in Methanococcus vannielii (strain ATCC 35089 / DSM 1224 / JCM 13029 / OCM 148 / SB).